The primary structure comprises 220 residues: Ribose-5-phosphate isomerase A (220 aa).

Substrate-binding positions include 29-32 (TGST), 82-85 (DGCD), and 95-98 (KGGG). The active-site Proton acceptor is the Glu-104. Lys-122 contributes to the substrate binding site.

This sequence belongs to the ribose 5-phosphate isomerase family. In terms of assembly, homodimer.

It carries out the reaction aldehydo-D-ribose 5-phosphate = D-ribulose 5-phosphate. Its pathway is carbohydrate degradation; pentose phosphate pathway; D-ribose 5-phosphate from D-ribulose 5-phosphate (non-oxidative stage): step 1/1. Catalyzes the reversible conversion of ribose-5-phosphate to ribulose 5-phosphate. In Laribacter hongkongensis (strain HLHK9), this protein is Ribose-5-phosphate isomerase A.